The chain runs to 113 residues: U11-theraphotoxin-Hhn1a (113 aa).

The N-terminal stretch at M1–A21 is a signal peptide. Residues D22–R74 constitute a propeptide that is removed on maturation. Disulfide bonds link C75-C90, C82-C95, and C89-C110.

The protein belongs to the neurotoxin 14 (magi-1) family. 01 (HNTX-16) subfamily. Expressed by the venom gland.

It localises to the secreted. Its function is as follows. Probable ion channel inhibitor. The polypeptide is U11-theraphotoxin-Hhn1a (Cyriopagopus hainanus (Chinese bird spider)).